Reading from the N-terminus, the 317-residue chain is Methionyl-tRNA formyltransferase (317 aa).

Residue 112–115 participates in (6S)-5,6,7,8-tetrahydrofolate binding; that stretch reads SLLP.

The protein belongs to the Fmt family.

The catalysed reaction is L-methionyl-tRNA(fMet) + (6R)-10-formyltetrahydrofolate = N-formyl-L-methionyl-tRNA(fMet) + (6S)-5,6,7,8-tetrahydrofolate + H(+). Functionally, attaches a formyl group to the free amino group of methionyl-tRNA(fMet). The formyl group appears to play a dual role in the initiator identity of N-formylmethionyl-tRNA by promoting its recognition by IF2 and preventing the misappropriation of this tRNA by the elongation apparatus. The polypeptide is Methionyl-tRNA formyltransferase (Mesorhizobium japonicum (strain LMG 29417 / CECT 9101 / MAFF 303099) (Mesorhizobium loti (strain MAFF 303099))).